The following is a 559-amino-acid chain: Protochlorophyllide-dependent translocon component 52, chloroplastic (559 aa).

Residues 1 to 55 (MEAALAACALPSLRILNTKPRFRCSFSNPSLPISPNSLITRKSSRFTTAVSSPPS) constitute a chloroplast transit peptide. Residues 44 to 70 (SRFTTAVSSPPSSSAATSTNSPPEPEA) form a disordered region. Residues 47-64 (TTAVSSPPSSSAATSTNS) are compositionally biased toward low complexity. Residues 85–195 (WYPVMPICDL…STVQHEIIWF (111 aa)) form the Rieske domain. Positions 127, 129, 147, and 150 each coordinate [2Fe-2S] cluster. The Fe cation site is built by H248 and H253. Positions 483–486 (CSSC) match the Redox-active motif motif. 2 consecutive transmembrane segments (helical) span residues 493 to 513 (LNALEVILQIASVAMIGVMAV) and 525 to 545 (IAVLVAAVLSFAASKWLSHFI).

The cofactor is [2Fe-2S] cluster.

The protein resides in the plastid. The protein localises to the chloroplast inner membrane. The catalysed reaction is protochlorophyllide a + 4 reduced [2Fe-2S]-[ferredoxin] + 2 O2 + 5 H(+) = protochlorophyllide b + 4 oxidized [2Fe-2S]-[ferredoxin] + 3 H2O. Down-regulated by light. In terms of biological role, part of a translocon most abundantly expressed in etiolated plants and involved in the protochlorophyllide-dependent import of the precursor NADPH:protochlorophyllide oxidoreductase A (pPORA). The polypeptide is Protochlorophyllide-dependent translocon component 52, chloroplastic (Arabidopsis thaliana (Mouse-ear cress)).